Consider the following 532-residue polypeptide: 2,3-bisphosphoglycerate-independent phosphoglycerate mutase (532 aa).

Residues aspartate 15 and serine 65 each contribute to the Mn(2+) site. Serine 65 serves as the catalytic Phosphoserine intermediate. Residues histidine 126, 156–157 (RD), arginine 188, arginine 194, 258–261 (RPDR), and lysine 331 each bind substrate. Aspartate 398, histidine 402, aspartate 439, histidine 440, and histidine 457 together coordinate Mn(2+).

The protein belongs to the BPG-independent phosphoglycerate mutase family. As to quaternary structure, monomer. The cofactor is Mn(2+).

The enzyme catalyses (2R)-2-phosphoglycerate = (2R)-3-phosphoglycerate. The protein operates within carbohydrate degradation; glycolysis; pyruvate from D-glyceraldehyde 3-phosphate: step 3/5. Catalyzes the interconversion of 2-phosphoglycerate and 3-phosphoglycerate. This chain is 2,3-bisphosphoglycerate-independent phosphoglycerate mutase, found in Cyanothece sp. (strain PCC 7425 / ATCC 29141).